Consider the following 502-residue polypeptide: Glutamate--tRNA ligase (502 aa).

The short motif at 9-19 (PSPTGFPHVGT) is the 'HIGH' region element. The short motif at 250-254 (KLSKR) is the 'KMSKS' region element. Lys-253 contributes to the ATP binding site.

It belongs to the class-I aminoacyl-tRNA synthetase family. Glutamate--tRNA ligase type 1 subfamily. In terms of assembly, monomer.

The protein resides in the cytoplasm. The catalysed reaction is tRNA(Glu) + L-glutamate + ATP = L-glutamyl-tRNA(Glu) + AMP + diphosphate. Functionally, catalyzes the attachment of glutamate to tRNA(Glu) in a two-step reaction: glutamate is first activated by ATP to form Glu-AMP and then transferred to the acceptor end of tRNA(Glu). The polypeptide is Glutamate--tRNA ligase (Acinetobacter baumannii (strain AYE)).